A 276-amino-acid polypeptide reads, in one-letter code: C-type lectin domain family 12 member B (276 aa).

Over 1 to 43 (MSEEVTYATLTFQDSAGARNNRDGNNLRKRGHPAPSPIWRHAA) the chain is Cytoplasmic. The short motif at 5–10 (VTYATL) is the ITIM motif element. Y7 carries the post-translational modification Phosphotyrosine. A helical; Signal-anchor for type II membrane protein transmembrane segment spans residues 44–64 (LGLVTLCLMLLIGLVTLGMMF). Over 65 to 276 (LQISNDINSD…AAPVKTEDLD (212 aa)) the chain is Extracellular. 3 N-linked (GlcNAc...) asparagine glycosylation sites follow: N91, N176, and N237. The region spanning 150–264 (YQNSCYYFTT…CSAEIFWICE (115 aa)) is the C-type lectin domain. Disulfide bonds link C172–C263 and C242–C255.

As to quaternary structure, homodimer. Interacts (via ITIM motif) with PTPN6. Interacts (via ITIM motif) with PTPN11; this interaction triggers dephosphorylation and activation of PTPN11. In terms of processing, N-glycosylated. Detected in colon, heart, kidney, liver, lung, mammary gland, ovary, spleen and testis. Expressed in melanocytes (at protein level).

The protein localises to the cell membrane. Inhibitory receptor postulated to negatively regulate immune and non-immune functions. Upon phosphorylation, recruits SH2 domain-containing PTPN6 and PTPN11 phosphatases to its ITIM motif and antagonizes activation signals. Although it inhibits KLRK1/NKG2D-mediated signaling, it does not bind known ligands of KLRK1/NKG2D and therefore is not its inhibitory counterpart. May limit activation of myeloid cell subsets in response to infection or tissue inflammation. May protect target cells against natural killer cell-mediated lysis. May negatively regulate cell cycle and differentiation of melanocytes via inactivation of STAT3. This chain is C-type lectin domain family 12 member B, found in Homo sapiens (Human).